The chain runs to 199 residues: Recombination protein RecR (199 aa).

The C4-type zinc finger occupies 58 to 73 (CSRCFYFTEEDPCPLC). One can recognise a Toprim domain in the interval 81-176 (QLICVVEEPQ…KVTRLAHGIP (96 aa)).

The protein belongs to the RecR family.

Its function is as follows. May play a role in DNA repair. It seems to be involved in an RecBC-independent recombinational process of DNA repair. It may act with RecF and RecO. This chain is Recombination protein RecR, found in Syntrophotalea carbinolica (strain DSM 2380 / NBRC 103641 / GraBd1) (Pelobacter carbinolicus).